A 428-amino-acid polypeptide reads, in one-letter code: S-adenosylmethionine synthase (428 aa).

Position 14 (His14) interacts with ATP. Position 16 (Asp16) interacts with Mg(2+). Glu42 is a binding site for K(+). Glu55 and Gln98 together coordinate L-methionine. The interval 98 to 108 is flexible loop; it reads QSGDINRGVER. Residues 165-167, 251-252, Asp260, 266-267, Ala283, and Lys287 contribute to the ATP site; these read DAK, KF, and RK. Asp260 serves as a coordination point for L-methionine. Lys291 contacts L-methionine.

This sequence belongs to the AdoMet synthase family. Homotetramer; dimer of dimers. It depends on Mg(2+) as a cofactor. Requires K(+) as cofactor.

It is found in the cytoplasm. It catalyses the reaction L-methionine + ATP + H2O = S-adenosyl-L-methionine + phosphate + diphosphate. It functions in the pathway amino-acid biosynthesis; S-adenosyl-L-methionine biosynthesis; S-adenosyl-L-methionine from L-methionine: step 1/1. Catalyzes the formation of S-adenosylmethionine (AdoMet) from methionine and ATP. The overall synthetic reaction is composed of two sequential steps, AdoMet formation and the subsequent tripolyphosphate hydrolysis which occurs prior to release of AdoMet from the enzyme. The protein is S-adenosylmethionine synthase of Parabacteroides distasonis (strain ATCC 8503 / DSM 20701 / CIP 104284 / JCM 5825 / NCTC 11152).